Consider the following 389-residue polypeptide: PqqA peptide cyclase (389 aa).

The Radical SAM core domain maps to 19–235 (VGLPLWLLAE…NEYRVRLEAE (217 aa)). 3 residues coordinate [4Fe-4S] cluster: Cys-33, Cys-37, and Cys-40.

The protein belongs to the radical SAM superfamily. PqqE family. In terms of assembly, interacts with PqqD. The interaction is necessary for activity of PqqE. [4Fe-4S] cluster is required as a cofactor.

It catalyses the reaction [PQQ precursor protein] + S-adenosyl-L-methionine = E-Y cross-linked-[PQQ precursor protein] + 5'-deoxyadenosine + L-methionine + H(+). Its pathway is cofactor biosynthesis; pyrroloquinoline quinone biosynthesis. Its function is as follows. Catalyzes the cross-linking of a glutamate residue and a tyrosine residue in the PqqA protein as part of the biosynthesis of pyrroloquinoline quinone (PQQ). The protein is PqqA peptide cyclase of Pseudomonas savastanoi pv. phaseolicola (strain 1448A / Race 6) (Pseudomonas syringae pv. phaseolicola (strain 1448A / Race 6)).